A 213-amino-acid polypeptide reads, in one-letter code: ATP phosphoribosyltransferase (213 aa).

Belongs to the ATP phosphoribosyltransferase family. Short subfamily. In terms of assembly, heteromultimer composed of HisG and HisZ subunits.

It is found in the cytoplasm. The enzyme catalyses 1-(5-phospho-beta-D-ribosyl)-ATP + diphosphate = 5-phospho-alpha-D-ribose 1-diphosphate + ATP. It functions in the pathway amino-acid biosynthesis; L-histidine biosynthesis; L-histidine from 5-phospho-alpha-D-ribose 1-diphosphate: step 1/9. Its function is as follows. Catalyzes the condensation of ATP and 5-phosphoribose 1-diphosphate to form N'-(5'-phosphoribosyl)-ATP (PR-ATP). Has a crucial role in the pathway because the rate of histidine biosynthesis seems to be controlled primarily by regulation of HisG enzymatic activity. This is ATP phosphoribosyltransferase from Variovorax paradoxus (strain S110).